The primary structure comprises 184 residues: Large ribosomal subunit protein uL6 (184 aa).

Belongs to the universal ribosomal protein uL6 family. In terms of assembly, part of the 50S ribosomal subunit.

Functionally, this protein binds to the 23S rRNA, and is important in its secondary structure. It is located near the subunit interface in the base of the L7/L12 stalk, and near the tRNA binding site of the peptidyltransferase center. The polypeptide is Large ribosomal subunit protein uL6 (Thermotoga petrophila (strain ATCC BAA-488 / DSM 13995 / JCM 10881 / RKU-1)).